A 398-amino-acid polypeptide reads, in one-letter code: MSDVLLVLNAGSSSIKFALYEAHTEPTADHLICEGGIGSLGHRPHFKVVNSDGSTRYDTYLPEGTSHDDAMAVLIGWIETTFPEHRLSAVGHRVVHGGALFDGPVDVTPEVIAQLRAFDRLAPLHQPHNVSAIEALAKLHPSLTQIACFDTAFHHRLPEVATAFALPRELTEQGVRRYGFHGLSYEYIAGRLPDVAGQAVADGRVVVAHLGAGASMCAMLRCRSIATTMGFTALDGLMMGSRCGELDPGVVLYLLEEKSMTAREIEDLLYRESGLLGVSGISDDMRTLLASDDPHACEAIELFVYRIARELGSLAAALGGLDALVFTGGIGEHASEIRRRVCEQAAWLGVTLDPDANARLSGAGRISAPDSKVSAWAIPTDEDLMIARHVWRLADGGR.

Asn-9 is a Mg(2+) binding site. ATP is bound at residue Lys-16. Position 93 (Arg-93) interacts with substrate. Asp-150 acts as the Proton donor/acceptor in catalysis. ATP is bound by residues His-209–Gly-213, Asp-284–Arg-286, and Gly-329–His-333. Glu-382 is a binding site for Mg(2+).

It belongs to the acetokinase family. In terms of assembly, homodimer. Mg(2+) serves as cofactor. Requires Mn(2+) as cofactor.

Its subcellular location is the cytoplasm. The catalysed reaction is acetate + ATP = acetyl phosphate + ADP. It participates in metabolic intermediate biosynthesis; acetyl-CoA biosynthesis; acetyl-CoA from acetate: step 1/2. Functionally, catalyzes the formation of acetyl phosphate from acetate and ATP. Can also catalyze the reverse reaction. This chain is Acetate kinase, found in Rhodopseudomonas palustris (strain TIE-1).